The primary structure comprises 176 residues: MATPEKAAAVAELTDKFRSSNAAVLTEYRGLTVAQLKTLRRSLGENAQYAVVKNTLTKIAANEAGITLDDQLFAGPTAVAFVTGDPVESAKGLRDFAKDNPNLVIKGGVLDGKAMSADEIKKLADLESREVLLSKLAGAFKGKQSQTAQLFQALPSKLVRTVDALRAKQDEQGGAE.

This sequence belongs to the universal ribosomal protein uL10 family. Part of the ribosomal stalk of the 50S ribosomal subunit. The N-terminus interacts with L11 and the large rRNA to form the base of the stalk. The C-terminus forms an elongated spine to which L12 dimers bind in a sequential fashion forming a multimeric L10(L12)X complex.

Its function is as follows. Forms part of the ribosomal stalk, playing a central role in the interaction of the ribosome with GTP-bound translation factors. The sequence is that of Large ribosomal subunit protein uL10 (rplJ) from Streptomyces coelicolor (strain ATCC BAA-471 / A3(2) / M145).